Consider the following 102-residue polypeptide: Large ribosomal subunit protein bL21 (102 aa).

The protein belongs to the bacterial ribosomal protein bL21 family. Part of the 50S ribosomal subunit. Contacts protein L20.

In terms of biological role, this protein binds to 23S rRNA in the presence of protein L20. The sequence is that of Large ribosomal subunit protein bL21 from Geobacter metallireducens (strain ATCC 53774 / DSM 7210 / GS-15).